The following is a 248-amino-acid chain: Tyrosine recombinase XerD-like (248 aa).

Residues 1 to 72 enclose the Core-binding (CB) domain; that stretch reads MIAFIEPFLA…TVNQFLYYLY (72 aa). The Tyr recombinase domain maps to 92-248; it reads SLKPQLTRLD…PITLEKYYKM (157 aa). Arginine 213 is an active-site residue. Tyrosine 245 serves as the catalytic O-(3'-phospho-DNA)-tyrosine intermediate.

Belongs to the 'phage' integrase family. XerD-like subfamily.

The protein resides in the cytoplasm. In terms of biological role, putative tyrosine recombinase. Not involved in the cutting and rejoining of the recombining DNA molecules on dif(SL) site. The sequence is that of Tyrosine recombinase XerD-like from Streptococcus equi subsp. zooepidemicus (strain H70).